Consider the following 160-residue polypeptide: Protein MGF 300-2R (160 aa).

The protein belongs to the asfivirus MGF 300 family.

Plays a role in virus cell tropism, and may be required for efficient virus replication in macrophages. In African swine fever virus (isolate Pig/Kenya/KEN-50/1950) (ASFV), this protein is Protein MGF 300-2R.